We begin with the raw amino-acid sequence, 904 residues long: MVTTASAPSEDRAKPTLMLLDGNSLAFRAFYALPAENFKTRGGLTTNAVYGFTAMLINLLRDEAPTHIAAAFDVSRQTFRLQRYPEYKANRSSTPDEFAGQIDITKEVLGALGITVLSEPGFEADDLIATLATQAENEGYRVLVVTGDRDALQLVSDDVTVLYPRKGVSELTRFTPEAVVEKYGLTPRQYPDFAALRGDPSDNLPGIPGVGEKTAAKWIAEYGSLRSLVDNVDAVRGKVGDALRANLASVVRNRELTDLVRDVPLAQTPDTLRLQPWDRDHIHRLFDDLEFRVLRDRLFDTLAAAGGPEVDEGFDVRGGALAPGTVRQWLAEHAGDGRRAGLTVVGTHLPHGGDATAMAVAAADGEGAYLDTATLTPDDDAALAAWLADPAKPKALHEAKAAVHDLAGRGWTLEGVTSDTALAAYLVRPGQRSFTLDDLSLRYLRRELRAETPQQQQLSLLDDDDTDAETIQTTILRARAVIDLADALDAELARIDSTALLGEMELPVQRVLAKMESAGIAVDLPMLTELQSQFGDQIRDAAEAAYGVIGKQINLGSPKQLQVVLFDELGMPKTKRTKTGYTTDADALQSLFDKTGHPFLQHLLAHRDVTRLKVTVDGLLQAVAADGRIHTTFNQTIAATGRLSSTEPNLQNIPIRTDAGRRIRDAFVVGDGYAELMTADYSQIEMRIMAHLSGDEGLIEAFNTGEDLHSFVASRAFGVPIDEVTGELRRRVKAMSYGLAYGLSAYGLSQQLKISTEEANEQMDAYFARFGGVRDYLRAVVERARKDGYTSTVLGRRRYLPELDSSNRQVREAAERAALNAPIQGSAADIIKVAMIQVDKALNEAQLASRMLLQVHDELLFEIAPGERERVEALVRDKMGGAYPLDVPLEVSVGYGRSWDAAAH.

The 5'-3' exonuclease domain occupies 186–279 (TPRQYPDFAA…DTLRLQPWDR (94 aa)). The 3'-5' exonuclease domain maps to 317-493 (RGGALAPGTV…LADALDAELA (177 aa)).

The protein belongs to the DNA polymerase type-A family. Single-chain monomer with multiple functions.

The enzyme catalyses DNA(n) + a 2'-deoxyribonucleoside 5'-triphosphate = DNA(n+1) + diphosphate. Functionally, in addition to polymerase activity, this DNA polymerase exhibits 3'-5' and 5'-3' exonuclease activity. This is DNA polymerase I (polA) from Mycobacterium bovis (strain ATCC BAA-935 / AF2122/97).